A 151-amino-acid chain; its full sequence is Ubiquitin-conjugating enzyme E2 2 (151 aa).

One can recognise a UBC core domain in the interval 4–150 (AARRRLMRDF…VRETVEKSWE (147 aa)). The active-site Glycyl thioester intermediate is cysteine 88.

The protein belongs to the ubiquitin-conjugating enzyme family.

It localises to the cytoplasm. The protein resides in the nucleus. It catalyses the reaction S-ubiquitinyl-[E1 ubiquitin-activating enzyme]-L-cysteine + [E2 ubiquitin-conjugating enzyme]-L-cysteine = [E1 ubiquitin-activating enzyme]-L-cysteine + S-ubiquitinyl-[E2 ubiquitin-conjugating enzyme]-L-cysteine.. It participates in protein modification; protein ubiquitination. In terms of biological role, catalyzes the covalent attachment of ubiquitin to other proteins. Plays a role in transcription regulation by catalyzing the monoubiquitination of histone H2B to form H2BK123ub1. H2BK123ub1 gives a specific tag for epigenetic transcriptional activation and is also a prerequisite for H3K4me and H3K79me formation. Also involved in postreplication repair of UV-damaged DNA, in N-end rule-dependent protein degradation and in sporulation. This is Ubiquitin-conjugating enzyme E2 2 (UBC2) from Fusarium solani (Filamentous fungus).